A 272-amino-acid chain; its full sequence is HMP-PP phosphatase (272 aa).

Aspartate 8 serves as the catalytic Nucleophile. Aspartate 8, aspartate 10, and aspartate 212 together coordinate Mg(2+).

This sequence belongs to the HAD-like hydrolase superfamily. Cof family. Requires Mg(2+) as cofactor.

The enzyme catalyses 4-amino-2-methyl-5-(diphosphooxymethyl)pyrimidine + H2O = 4-amino-2-methyl-5-(phosphooxymethyl)pyrimidine + phosphate + H(+). Functionally, catalyzes the hydrolysis of 4-amino-2-methyl-5-hydroxymethylpyrimidine pyrophosphate (HMP-PP) to 4-amino-2-methyl-5-hydroxymethylpyrimidine phosphate (HMP-P). In Escherichia coli (strain 55989 / EAEC), this protein is HMP-PP phosphatase.